Here is a 281-residue protein sequence, read N- to C-terminus: 2,3,4,5-tetrahydropyridine-2,6-dicarboxylate N-succinyltransferase (281 aa).

Positions 108 and 145 each coordinate substrate.

Belongs to the transferase hexapeptide repeat family. Homotrimer.

It is found in the cytoplasm. It catalyses the reaction (S)-2,3,4,5-tetrahydrodipicolinate + succinyl-CoA + H2O = (S)-2-succinylamino-6-oxoheptanedioate + CoA. Its pathway is amino-acid biosynthesis; L-lysine biosynthesis via DAP pathway; LL-2,6-diaminopimelate from (S)-tetrahydrodipicolinate (succinylase route): step 1/3. The sequence is that of 2,3,4,5-tetrahydropyridine-2,6-dicarboxylate N-succinyltransferase from Rhodopseudomonas palustris (strain BisA53).